The following is a 512-amino-acid chain: Protein male-specific lethal-3 (512 aa).

The Chromo domain maps to 11–90 (FHKGEIVLCY…QLQRELAEAA (80 aa)). Residues 98–175 (YSYKGTPDKP…DGRLKGNRGR (78 aa)) form a disordered region. Over residues 149 to 169 (RTRDNSGGKRKEKPPSGDGRL) the composition is skewed to basic and acidic residues. One can recognise an MRG domain in the interval 196–500 (QEDRIMMRVS…STALPQEDLQ (305 aa)).

As to quaternary structure, component of the male-specific lethal (MSL) histone acetyltransferase complex, composed of mof, mle, msl-1, msl-2 and msl-3 proteins, as well as roX1 and roX2 non-coding RNAs. Component of a maternal MSL subcomplex composed of mof, msl-1 and msl-3. Post-translationally, ubiquitinated by msl-2.

The protein resides in the nucleus. It is found in the chromosome. Its function is as follows. Component of the male-specific lethal (MSL) histone acetyltransferase complex, a multiprotein complex essential for elevating transcription of the single X chromosome in the male (X chromosome dosage compensation). The MSL complex specifically associates with the single X chromosome in males and mediates formation of H4K16ac, promoting a two-fold activation of X chromosome. Acts as a histone reader that specifically recognizes and binds histone H3 trimethylated at 'Lys-36' (H3K36me3) and histone H4 monomethylated at 'Lys-20' (H4K20me1). Within the MSL complex, mediates the spreading of the MSL complex from initiation sites on the male X chromosome to flanking chromatin. Following initial recruitment of the MSL complex to male X chromosome by msl-2, msl-3 binds H3K36me3 and promotes spreading of the MSL complex in cis. In addition to its role in dosage compensation in males, promotes germline stem cell differentiation in females: recognizes and binds H3K36me3, promoting recruitment of the ATAC complex and transcription of genes, such as RpS19b. The polypeptide is Protein male-specific lethal-3 (Drosophila melanogaster (Fruit fly)).